Here is a 429-residue protein sequence, read N- to C-terminus: MSDSTASSINKGLAAADPAIAALIEKEQQRQETHLELIASENFASRAVMDAQGSVLTNKYAEGLPSKRYYGGCEHVDAIEELAIERAKELFGAAWANVQPHSGAQANFAVFLALLQPGDTIMGLDLSHGGHLTHGSPVNVSGKWFNVVQYGVDRETQRLDMEAIRQLALEHKPKLIVCGFSAYPRTIDFAAFRAIADEVGAFLLADMAHIAGLVAAGVHPSPVPHCDVVTTTTHKTLRGPRGGLILCRDADFAKKFDKAVFPGSQGGPLEHVIAAKAVAFGEALQPAFKTYSQHVVANAAALAERLIARGIDVVSGGTDNHVVLLDLRSVGMTGKVADLLVSDVHITANKNTVPFDPESPFVTSGLRLGTAALTTRGFDAGAFREVADVIADRLLNPEDDAVQQQCLRRVEALCQRFPLYAAARQPALA.

(6S)-5,6,7,8-tetrahydrofolate contacts are provided by residues Leu-126 and 130–132 (GHL). An N6-(pyridoxal phosphate)lysine modification is found at Lys-235. 359-361 (SPF) is a (6S)-5,6,7,8-tetrahydrofolate binding site.

It belongs to the SHMT family. Homodimer. The cofactor is pyridoxal 5'-phosphate.

It localises to the cytoplasm. It catalyses the reaction (6R)-5,10-methylene-5,6,7,8-tetrahydrofolate + glycine + H2O = (6S)-5,6,7,8-tetrahydrofolate + L-serine. The protein operates within one-carbon metabolism; tetrahydrofolate interconversion. It participates in amino-acid biosynthesis; glycine biosynthesis; glycine from L-serine: step 1/1. Functionally, catalyzes the reversible interconversion of serine and glycine with tetrahydrofolate (THF) serving as the one-carbon carrier. This reaction serves as the major source of one-carbon groups required for the biosynthesis of purines, thymidylate, methionine, and other important biomolecules. Also exhibits THF-independent aldolase activity toward beta-hydroxyamino acids, producing glycine and aldehydes, via a retro-aldol mechanism. This is Serine hydroxymethyltransferase from Parasynechococcus marenigrum (strain WH8102).